Reading from the N-terminus, the 131-residue chain is Holin-like protein CidA (131 aa).

The next 4 membrane-spanning stretches (helical) occupy residues 4-24 (VQLIIKLLLQLGIIIVITYIG), 30-50 (IFHLPLAGSIVGLFLFYLLLQ), 65-85 (FLLKTMVFFFIPSVVGIMDVA), and 88-108 (ITLNYILFFAVIIIGTCIVAL).

Belongs to the CidA/LrgA family. CidA subfamily.

It is found in the cell membrane. Functionally, increases the activity of extracellular murein hydrolases possibly by mediating their export via hole formation. Inhibited by the antiholin-like proteins LrgAB. In an unstressed cell, the LrgAB products probably inhibit the function of the CidAB proteins. When a cell is stressed by the addition of antibiotics or by other factors in the environment, the CidAB proteins possibly oligomerize within the bacterial cell membrane, creating lesions that disrupt the proton motive force, which in turn results in loss of cell viability. These lesions are also hypothesized to regulate the subsequent cell lysis by either allowing the murein hydrolases access to the cell wall substrate and/or regulating their activity by a possible change in the cell wall pH that results from loss of membrane potential. The protein is Holin-like protein CidA of Staphylococcus aureus (strain Mu3 / ATCC 700698).